A 504-amino-acid chain; its full sequence is Dolichol kinase sec59 (504 aa).

The Cytoplasmic portion of the chain corresponds to 1–55 (MYIMSKKCYDTSEKIDREQECVEVNYQHRNFESILEIFSVLFIPFLCNSGKKFLQ). Residues 56 to 76 (ISNASFFLPACFYLLGSSSII) traverse the membrane as a helical segment. Residue Gln-77 is a topological domain, lumenal. The helical transmembrane segment at 78–98 (LYEPLLWLSSFPFCILYVGFG) threads the bilayer. Over 99–157 (ENSVLYHEMYTVCLYNALLSLTQRWKWLSIVLDGLGNSSVNLKLHETVILAFLEITQNS) the chain is Cytoplasmic. Residues 158 to 178 (FTFIEGILICTGLTGLCFATF) traverse the membrane as a helical segment. The Lumenal portion of the chain corresponds to 179–187 (SYEVSPVVS). A helical membrane pass occupies residues 188-208 (VLSGVLLISLPTLILLNLCIL). The Cytoplasmic segment spans residues 209–215 (KLAAKLH). A helical membrane pass occupies residues 216 to 236 (LSALFTTCLIYFFSALLVFLV). The Lumenal portion of the chain corresponds to 237–263 (SRSWVAGQLGQAPEVWLFNQIFSHRNS). A helical transmembrane segment spans residues 264–284 (LTRIKIIIWWIICLGCFIFIL). Residues 285–325 (LRSNRNNPLGKYFTTEDEVLNFRRKTYHALVVFLFLPVCCL) lie on the Cytoplasmic side of the membrane. A helical membrane pass occupies residues 326–347 (DPHFLHLSFSGVLFIFLFVEGI). Residues 348–373 (RILRLKPFGKMIHEFLWEYTDNRDHK) lie on the Lumenal side of the membrane. The helical transmembrane segment at 374 to 394 (GPLIISHIYLLIGCAIPIWLS) threads the bilayer. Residues 395–403 (NALKGPVAS) are Cytoplasmic-facing. Residues 404–424 (VELLVGVLCLGCGDSMASIIG) form a helical membrane-spanning segment. Over 425 to 440 (KRFGKHRISKTNKSIE) the chain is Lumenal. The chain crosses the membrane as a helical span at residues 441–461 (GVFAFSISVFLVLHLTQAFHV). Residue Cys-462 is a topological domain, cytoplasmic. The helical transmembrane segment at 463-483 (PSVTFWKTLFMSLCTAILEGV) threads the bilayer. Over 484–504 (STENDNLILPMYMWVLYQALD) the chain is Lumenal.

Belongs to the polyprenol kinase family.

It is found in the endoplasmic reticulum membrane. It carries out the reaction a di-trans,poly-cis-dolichol + CTP = a di-trans,poly-cis-dolichyl phosphate + CDP + H(+). Its pathway is protein modification; protein glycosylation. In terms of biological role, catalyzes CTP-mediated phosphorylation of dolichol, the terminal step in de novo dolichyl monophosphate (Dol-P) biosynthesis. Dol-P is a lipid carrier essential for the synthesis of N-linked and O-linked oligosaccharides and for GPI anchors. The polypeptide is Dolichol kinase sec59 (Schizosaccharomyces pombe (strain 972 / ATCC 24843) (Fission yeast)).